The sequence spans 90 residues: UPF0223 protein lmo1058 (90 aa).

The protein belongs to the UPF0223 family.

The chain is UPF0223 protein lmo1058 from Listeria monocytogenes serovar 1/2a (strain ATCC BAA-679 / EGD-e).